Here is a 183-residue protein sequence, read N- to C-terminus: ATP synthase subunit b 2 (183 aa).

A helical transmembrane segment spans residues 27–47 (PSFYAFLALLIFFGLLLHMGV).

The protein belongs to the ATPase B chain family. F-type ATPases have 2 components, F(1) - the catalytic core - and F(0) - the membrane proton channel. F(1) has five subunits: alpha(3), beta(3), gamma(1), delta(1), epsilon(1). F(0) has three main subunits: a(1), b(2) and c(10-14). The alpha and beta chains form an alternating ring which encloses part of the gamma chain. F(1) is attached to F(0) by a central stalk formed by the gamma and epsilon chains, while a peripheral stalk is formed by the delta and b chains.

The protein resides in the cell inner membrane. F(1)F(0) ATP synthase produces ATP from ADP in the presence of a proton or sodium gradient. F-type ATPases consist of two structural domains, F(1) containing the extramembraneous catalytic core and F(0) containing the membrane proton channel, linked together by a central stalk and a peripheral stalk. During catalysis, ATP synthesis in the catalytic domain of F(1) is coupled via a rotary mechanism of the central stalk subunits to proton translocation. In terms of biological role, component of the F(0) channel, it forms part of the peripheral stalk, linking F(1) to F(0). This Maricaulis maris (strain MCS10) (Caulobacter maris) protein is ATP synthase subunit b 2.